The chain runs to 150 residues: Large ribosomal subunit protein uL13 (150 aa).

This sequence belongs to the universal ribosomal protein uL13 family. Part of the 50S ribosomal subunit.

Functionally, this protein is one of the early assembly proteins of the 50S ribosomal subunit, although it is not seen to bind rRNA by itself. It is important during the early stages of 50S assembly. This chain is Large ribosomal subunit protein uL13, found in Persephonella marina (strain DSM 14350 / EX-H1).